Consider the following 217-residue polypeptide: Small ribosomal subunit protein uS3c (217 aa).

Residues 46–117 (VQKHIKNSSN…RLRMTLIEIA (72 aa)) form the KH type-2 domain.

This sequence belongs to the universal ribosomal protein uS3 family. Part of the 30S ribosomal subunit.

The protein resides in the plastid. Its subcellular location is the chloroplast. The chain is Small ribosomal subunit protein uS3c (rps3) from Marchantia polymorpha (Common liverwort).